Here is a 587-residue protein sequence, read N- to C-terminus: Phosphomethylpyrimidine synthase (587 aa).

Positions 1–58 are disordered; it reads MTPTQNEIHPKHSYSPIRKDGLEVPETEIRLDDSPSGPNEPFRIYRTRGPETNPKQGL. Residues 17–33 are compositionally biased toward basic and acidic residues; that stretch reads IRKDGLEVPETEIRLDD. Substrate contacts are provided by residues asparagine 180, methionine 209, tyrosine 238, histidine 274, 294-296, 335-338, and glutamate 374; these read SRG and DGLR. Zn(2+) is bound at residue histidine 378. Tyrosine 401 is a substrate binding site. Position 442 (histidine 442) interacts with Zn(2+). Residues cysteine 522, cysteine 525, and cysteine 530 each contribute to the [4Fe-4S] cluster site.

It belongs to the ThiC family. The cofactor is [4Fe-4S] cluster.

The catalysed reaction is 5-amino-1-(5-phospho-beta-D-ribosyl)imidazole + S-adenosyl-L-methionine = 4-amino-2-methyl-5-(phosphooxymethyl)pyrimidine + CO + 5'-deoxyadenosine + formate + L-methionine + 3 H(+). Its pathway is cofactor biosynthesis; thiamine diphosphate biosynthesis. In terms of biological role, catalyzes the synthesis of the hydroxymethylpyrimidine phosphate (HMP-P) moiety of thiamine from aminoimidazole ribotide (AIR) in a radical S-adenosyl-L-methionine (SAM)-dependent reaction. The polypeptide is Phosphomethylpyrimidine synthase (Corynebacterium glutamicum (strain ATCC 13032 / DSM 20300 / JCM 1318 / BCRC 11384 / CCUG 27702 / LMG 3730 / NBRC 12168 / NCIMB 10025 / NRRL B-2784 / 534)).